We begin with the raw amino-acid sequence, 396 residues long: MIISAASDYRAAAQRTLPPFLFHYIDGGAYAEYTLRRNVEDLSQVALRQRVLKNMSDLSLETTLFNETLSMPVALAPVGLCGMYARRGEVQAAAAADAKGIPFTLSTVSVCPIEEVAPTIQRPMWFQLYVLRDRGFMRNALERAKAAGCSTLVFTVDMPTPGARYRDAHSGMSGPNAAMRRYWQAVMHPKWAWDVGLNGRPHDLGNISAYLGKPTGLEDYIGWLANNFDPSISWKDLEWIREFWDGPMVIKGILDPEDARDAVRFGADGIVVSNHGGRQLDGVLSSARALPAIADAVKGDIAILADSGIRNGLDVVRMIALGADTVLLGRAYLYALATAGKAGVANLLDLIEKEMKVAMTLTGAKSISEISGDSLVQELGRSLPAALAPMSKGDAA.

One can recognise an FMN hydroxy acid dehydrogenase domain in the interval 1 to 380 (MIISAASDYR…SGDSLVQELG (380 aa)). Tyrosine 24 is a substrate binding site. The FMN site is built by serine 106 and glutamine 127. Tyrosine 129 provides a ligand contact to substrate. Residue threonine 155 participates in FMN binding. Arginine 164 is a substrate binding site. Residue lysine 251 participates in FMN binding. The active-site Proton acceptor is the histidine 275. Arginine 278 contributes to the substrate binding site. 306–330 (DSGIRNGLDVVRMIALGADTVLLGR) provides a ligand contact to FMN.

The protein belongs to the FMN-dependent alpha-hydroxy acid dehydrogenase family. FMN serves as cofactor.

It localises to the cell inner membrane. It carries out the reaction (S)-lactate + A = pyruvate + AH2. Catalyzes the conversion of L-lactate to pyruvate. Is coupled to the respiratory chain. The polypeptide is L-lactate dehydrogenase (Salmonella heidelberg (strain SL476)).